The chain runs to 357 residues: MIRVLVVDDSAFMRKMISDFLTEEKQIEVIGTARNGEEALKKIELLKPDVITLDVEMPVMNGTDTLRKIIEIYNLPVIMVSSQTEKGKECTINCLEIGAFDFITKPSGSISLDLYKIKEQLVERVVAAGLSGKRKRPVSQTVRPEPIVRAVVKPELSKPKPGTGRQIVCIGTSTGGPRALQKVIPKLPKDLNAPVVVVQHMPEGFTASLADRLNHLSDIQVKEAKDGEAALNGCVYIAPGGKNISVIKNSEGLQVVLDNHDTPSRHKPSADYLFRSVGKLTDYEKVAVIMTGMGSDGTAGLKDMLTAGNVKAIAESEESCVVYGMPKAAVKAGLIHEIKHVEDIAASITSCVKKERV.

Residues 3 to 120 (RVLVVDDSAF…SLDLYKIKEQ (118 aa)) enclose the Response regulatory domain. A 4-aspartylphosphate modification is found at aspartate 54. The CheB-type methylesterase domain maps to 161 to 355 (PGTGRQIVCI…ASITSCVKKE (195 aa)). Active-site residues include serine 173, histidine 200, and aspartate 296.

It belongs to the CheB family. Post-translationally, phosphorylated by CheA. Phosphorylation of the N-terminal regulatory domain activates the methylesterase activity.

The protein resides in the cytoplasm. It catalyses the reaction [protein]-L-glutamate 5-O-methyl ester + H2O = L-glutamyl-[protein] + methanol + H(+). The enzyme catalyses L-glutaminyl-[protein] + H2O = L-glutamyl-[protein] + NH4(+). In terms of biological role, involved in the modulation of the chemotaxis system; catalyzes the demethylation of specific methylglutamate residues introduced into the chemoreceptors (methyl-accepting chemotaxis proteins) by CheR. B.subtilis has an effective methylation-independent adaptation system but must utilize the methylation system for adaptation to high concentrations of attractant. This chain is Protein-glutamate methylesterase/protein-glutamine glutaminase, found in Bacillus subtilis (strain 168).